The following is a 431-amino-acid chain: Enolase (431 aa).

Q167 provides a ligand contact to (2R)-2-phosphoglycerate. The active-site Proton donor is E209. Mg(2+) contacts are provided by D246, E289, and D316. Residues K341, R370, S371, and K392 each contribute to the (2R)-2-phosphoglycerate site. K341 serves as the catalytic Proton acceptor.

This sequence belongs to the enolase family. Component of the RNA degradosome, a multiprotein complex involved in RNA processing and mRNA degradation. Requires Mg(2+) as cofactor.

It localises to the cytoplasm. The protein resides in the secreted. Its subcellular location is the cell surface. It carries out the reaction (2R)-2-phosphoglycerate = phosphoenolpyruvate + H2O. Its pathway is carbohydrate degradation; glycolysis; pyruvate from D-glyceraldehyde 3-phosphate: step 4/5. Its function is as follows. Catalyzes the reversible conversion of 2-phosphoglycerate (2-PG) into phosphoenolpyruvate (PEP). It is essential for the degradation of carbohydrates via glycolysis. The sequence is that of Enolase from Marinobacter nauticus (strain ATCC 700491 / DSM 11845 / VT8) (Marinobacter aquaeolei).